A 199-amino-acid polypeptide reads, in one-letter code: Recombination protein RecR (199 aa).

The C4-type zinc finger occupies 56–71 (CAICGNVAEHEQCRIC). The Toprim domain occupies 79 to 174 (TVLCVVEEPK…RVTRLASGLP (96 aa)).

The protein belongs to the RecR family.

Functionally, may play a role in DNA repair. It seems to be involved in an RecBC-independent recombinational process of DNA repair. It may act with RecF and RecO. In Acidothermus cellulolyticus (strain ATCC 43068 / DSM 8971 / 11B), this protein is Recombination protein RecR.